A 178-amino-acid polypeptide reads, in one-letter code: Large ribosomal subunit protein uL6 (178 aa).

It belongs to the universal ribosomal protein uL6 family. In terms of assembly, part of the 50S ribosomal subunit.

In terms of biological role, this protein binds to the 23S rRNA, and is important in its secondary structure. It is located near the subunit interface in the base of the L7/L12 stalk, and near the tRNA binding site of the peptidyltransferase center. The sequence is that of Large ribosomal subunit protein uL6 from Lactiplantibacillus plantarum (strain ATCC BAA-793 / NCIMB 8826 / WCFS1) (Lactobacillus plantarum).